Consider the following 282-residue polypeptide: Pantothenate synthetase (282 aa).

30–37 (MGNLHLGH) provides a ligand contact to ATP. Residue His-37 is the Proton donor of the active site. Gln-61 is a binding site for (R)-pantoate. Residue Gln-61 coordinates beta-alanine. 149–152 (GQKD) contacts ATP. (R)-pantoate is bound at residue Gln-155. ATP-binding positions include Ile-178 and 186–189 (MSSR).

The protein belongs to the pantothenate synthetase family. As to quaternary structure, homodimer.

It localises to the cytoplasm. The catalysed reaction is (R)-pantoate + beta-alanine + ATP = (R)-pantothenate + AMP + diphosphate + H(+). Its pathway is cofactor biosynthesis; (R)-pantothenate biosynthesis; (R)-pantothenate from (R)-pantoate and beta-alanine: step 1/1. Catalyzes the condensation of pantoate with beta-alanine in an ATP-dependent reaction via a pantoyl-adenylate intermediate. The polypeptide is Pantothenate synthetase (Shewanella piezotolerans (strain WP3 / JCM 13877)).